The primary structure comprises 143 residues: Alpha-S2-casein-like B (143 aa).

The N-terminal stretch at 1 to 15 (MKFIILTCLLAVALA) is a signal peptide.

It belongs to the alpha-casein family. As to expression, mammary gland specific. Secreted in milk.

It localises to the secreted. Important role in the capacity of milk to transport calcium phosphate. This is Alpha-S2-casein-like B (Csn1s2b) from Mus musculus (Mouse).